Consider the following 130-residue polypeptide: Phosphoribosyl-AMP cyclohydrolase (130 aa).

Mg(2+) is bound at residue Asp78. Cys79 is a Zn(2+) binding site. Residues Asp80 and Asp82 each contribute to the Mg(2+) site. Residues Cys96 and Cys103 each coordinate Zn(2+).

The protein belongs to the PRA-CH family. In terms of assembly, homodimer. Requires Mg(2+) as cofactor. It depends on Zn(2+) as a cofactor.

Its subcellular location is the cytoplasm. The enzyme catalyses 1-(5-phospho-beta-D-ribosyl)-5'-AMP + H2O = 1-(5-phospho-beta-D-ribosyl)-5-[(5-phospho-beta-D-ribosylamino)methylideneamino]imidazole-4-carboxamide. It participates in amino-acid biosynthesis; L-histidine biosynthesis; L-histidine from 5-phospho-alpha-D-ribose 1-diphosphate: step 3/9. Functionally, catalyzes the hydrolysis of the adenine ring of phosphoribosyl-AMP. The chain is Phosphoribosyl-AMP cyclohydrolase from Nitrosospira multiformis (strain ATCC 25196 / NCIMB 11849 / C 71).